The following is a 447-amino-acid chain: MTIGLEPAVSSKTKDKMEQDLSPIADKSCKENRELAKSGKLIEAIENLLITEKQCRQAEDSPSTSKIAAEIIKLCYEAGRLDLVNEKLVLLSKRRGQLRPAIKAIVQESMVYVDQITDMKQKLELIDTLRTISDGKIFVENERARLTKTLSKIKEDEGDIASAAKILQDLQVETYGTMEKREKITFFIDQMRICMNNKDFIRAQLIGNKVNRKTLAEDENQDLKIDYFKQMIRYFSHSANYIEIARCYLSIYDTPSVEKDTPQLLQTLKYICIYVILSASSNEQSDLLNRVYEFKPLTDIQNYKDLLNQFKTLELIRWSTFFELNKPELDSQTVFKTEPNAWEDLRKRVIEHNIRVISTYYQKISTARLAELLDLSLDESEKFVSDLVSNKTIFAKIDRPAGIATFTTTNDPNKVLNAWANNITSLLDLVEKTNHLVQREFMLHKIN.

The tract at residues 1 to 23 (MTIGLEPAVSSKTKDKMEQDLSP) is disordered. The PCI domain maps to 240–411 (NYIEIARCYL…GIATFTTTND (172 aa)).

Belongs to the proteasome subunit p55 family.

In terms of biological role, acts as a regulatory subunit of the 26S proteasome which is involved in the ATP-dependent degradation of ubiquitinated proteins. The chain is 26S proteasome non-ATPase regulatory subunit 12 (psmD12) from Dictyostelium discoideum (Social amoeba).